The following is a 335-amino-acid chain: Glyceraldehyde-3-phosphate dehydrogenase, cytosolic (335 aa).

NAD(+)-binding positions include 13 to 14 (RI), aspartate 35, and arginine 80. Residues 151–153 (SCT), threonine 182, 211–212 (TG), and arginine 234 each bind D-glyceraldehyde 3-phosphate. Cysteine 152 acts as the Nucleophile in catalysis. Asparagine 316 serves as a coordination point for NAD(+).

The protein belongs to the glyceraldehyde-3-phosphate dehydrogenase family. In terms of assembly, homotetramer.

The protein localises to the cytoplasm. The enzyme catalyses D-glyceraldehyde 3-phosphate + phosphate + NAD(+) = (2R)-3-phospho-glyceroyl phosphate + NADH + H(+). It participates in carbohydrate degradation; glycolysis; pyruvate from D-glyceraldehyde 3-phosphate: step 1/5. This Chondrus crispus (Carrageen Irish moss) protein is Glyceraldehyde-3-phosphate dehydrogenase, cytosolic (GAPC).